The sequence spans 150 residues: MKIIARNKKALFDYSIIERFEAGIVLKGSEVVALRAGRANLKDSFVRIIKNEIFLLNSHISLLHTTHSFYKHEERGARKLLMHRKQIDKLLGKVSIEGYTIVALDLYFNTKNKVKATLALAKGKNLHDKRETLKKKQADLEAKAAMKNYK.

The protein belongs to the SmpB family.

It is found in the cytoplasm. Functionally, required for rescue of stalled ribosomes mediated by trans-translation. Binds to transfer-messenger RNA (tmRNA), required for stable association of tmRNA with ribosomes. tmRNA and SmpB together mimic tRNA shape, replacing the anticodon stem-loop with SmpB. tmRNA is encoded by the ssrA gene; the 2 termini fold to resemble tRNA(Ala) and it encodes a 'tag peptide', a short internal open reading frame. During trans-translation Ala-aminoacylated tmRNA acts like a tRNA, entering the A-site of stalled ribosomes, displacing the stalled mRNA. The ribosome then switches to translate the ORF on the tmRNA; the nascent peptide is terminated with the 'tag peptide' encoded by the tmRNA and targeted for degradation. The ribosome is freed to recommence translation, which seems to be the essential function of trans-translation. The protein is SsrA-binding protein of Campylobacter jejuni (strain RM1221).